We begin with the raw amino-acid sequence, 175 residues long: Ribosome maturation factor RimP (175 aa).

Residues 152–175 (EFNRPTDGPGDDGDDGGDDEAGEA) form a disordered region. A compositionally biased stretch (acidic residues) spans 160 to 175 (PGDDGDDGGDDEAGEA).

The protein belongs to the RimP family.

Its subcellular location is the cytoplasm. In terms of biological role, required for maturation of 30S ribosomal subunits. This Nocardioides sp. (strain ATCC BAA-499 / JS614) protein is Ribosome maturation factor RimP.